The following is a 141-amino-acid chain: ATP synthase epsilon chain (141 aa).

The protein belongs to the ATPase epsilon chain family. F-type ATPases have 2 components, CF(1) - the catalytic core - and CF(0) - the membrane proton channel. CF(1) has five subunits: alpha(3), beta(3), gamma(1), delta(1), epsilon(1). CF(0) has three main subunits: a, b and c.

It is found in the cell inner membrane. Produces ATP from ADP in the presence of a proton gradient across the membrane. This chain is ATP synthase epsilon chain, found in Burkholderia cenocepacia (strain ATCC BAA-245 / DSM 16553 / LMG 16656 / NCTC 13227 / J2315 / CF5610) (Burkholderia cepacia (strain J2315)).